Consider the following 467-residue polypeptide: Cysteine--tRNA ligase (467 aa).

A Zn(2+)-binding site is contributed by Cys-28. The 'HIGH' region signature appears at 30 to 40; that stretch reads ITAYDYSHIGH. Residues Cys-211, His-236, and Glu-240 each contribute to the Zn(2+) site. Positions 268-272 match the 'KMSKS' region motif; sequence KMSKS. Lys-271 serves as a coordination point for ATP.

Belongs to the class-I aminoacyl-tRNA synthetase family. Zn(2+) is required as a cofactor.

The protein resides in the cytoplasm. The enzyme catalyses tRNA(Cys) + L-cysteine + ATP = L-cysteinyl-tRNA(Cys) + AMP + diphosphate. The sequence is that of Cysteine--tRNA ligase (cysS) from Archaeoglobus fulgidus (strain ATCC 49558 / DSM 4304 / JCM 9628 / NBRC 100126 / VC-16).